Here is a 369-residue protein sequence, read N- to C-terminus: 2-aminoethylphosphonate--pyruvate transaminase (369 aa).

At Lys193 the chain carries N6-(pyridoxal phosphate)lysine.

This sequence belongs to the class-V pyridoxal-phosphate-dependent aminotransferase family. PhnW subfamily. Homodimer. The cofactor is pyridoxal 5'-phosphate.

It carries out the reaction (2-aminoethyl)phosphonate + pyruvate = phosphonoacetaldehyde + L-alanine. Involved in phosphonate degradation. The sequence is that of 2-aminoethylphosphonate--pyruvate transaminase from Pseudomonas fluorescens (strain ATCC BAA-477 / NRRL B-23932 / Pf-5).